Reading from the N-terminus, the 445-residue chain is MNWSLQLRSFILCWALLLLSPTGLAQYTATRDNCCILDERFGSYCPTTCGISDFLNSYQTDVDTDLQTLENILQRAENRTTEAKELIKAIQVYYNPDQPPKPGMIEGATQKSKKMVEEILKYEALLLTHESSIRYLQDIYTSNKQKITNLKQKVAQLEAQCQEPCKDSVRIHDTTGKDCQDIANKGAKESGLYFIRPLKATQQFLVYCEIDGSGNGWTVLQKRLDGSVDFKKNWIQYKEGFGHLSPTGTTEFWLGNEKIHLISMQSTIPYALRIQLKDWSGRTSTADYAMFRVGPESDKYRLTYAYFIGGDAGDAFDGYDFGDDPSDKFFTSHNGMHFSTWDNDNDKFEGNCAEQDGSGWWMNKCHAGHLNGVYYQGGTYSKSSTPNGYDNGIIWATWKTRWYSMKETTMKIIPFNRLSIGDGQQHHMGGSKQVSVEHEVDVEYP.

The N-terminal stretch at 1–25 (MNWSLQLRSFILCWALLLLSPTGLA) is a signal peptide. The N-linked (GlcNAc...) asparagine glycan is linked to asparagine 78. The Fibrinogen C-terminal domain maps to 170–416 (RIHDTTGKDC…ETTMKIIPFN (247 aa)). Cysteine 179 and cysteine 208 are disulfide-bonded. Ca(2+) is bound by residues aspartate 344, aspartate 346, and glycine 350. The cysteines at positions 352 and 365 are disulfide-linked. A gamma-chain polymerization, binding amino end of another fibrin alpha chain region spans residues 400–422 (TRWYSMKETTMKIIPFNRLSIGD). Glutamine 424 participates in a covalent cross-link: Isoglutamyl lysine isopeptide (Gln-Lys) (interchain with K-432). Positions 424 to 445 (QQHHMGGSKQVSVEHEVDVEYP) are disordered. Serine 431 is subject to Phosphoserine. An Isoglutamyl lysine isopeptide (Lys-Gln) (interchain with Q-424) cross-link involves residue lysine 432. A compositionally biased stretch (basic and acidic residues) spans 435–445 (SVEHEVDVEYP).

As to quaternary structure, heterohexamer; disulfide linked. Contains 2 sets of 3 non-identical chains (alpha, beta and gamma). The 2 heterotrimers are in head to head conformation with the N-termini in a small central domain. Conversion of fibrinogen to fibrin is triggered by thrombin, which cleaves fibrinopeptides A and B from alpha and beta chains, and thus exposes the N-terminal polymerization sites responsible for the formation of the soft clot. The soft clot is converted into the hard clot by factor XIIIA which catalyzes the epsilon-(gamma-glutamyl)lysine cross-linking between gamma chains (stronger) and between alpha chains (weaker) of different monomers.

The protein localises to the secreted. In terms of biological role, together with fibrinogen alpha (FGA) and fibrinogen beta (FGB), polymerizes to form an insoluble fibrin matrix. Has a major function in hemostasis as one of the primary components of blood clots. In addition, functions during the early stages of wound repair to stabilize the lesion and guide cell migration during re-epithelialization. Was originally thought to be essential for platelet aggregation, based on in vitro studies using anticoagulated blood. However, subsequent studies have shown that it is not absolutely required for thrombus formation in vivo. Enhances expression of SELP in activated platelets via an ITGB3-dependent pathway. Maternal fibrinogen is essential for successful pregnancy. Fibrin deposition is also associated with infection, where it protects against IFNG-mediated hemorrhage. May also facilitate the antibacterial immune response via both innate and T-cell mediated pathways. The polypeptide is Fibrinogen gamma chain (Fgg) (Rattus norvegicus (Rat)).